The sequence spans 617 residues: Chaperone protein HscA homolog (617 aa).

This sequence belongs to the heat shock protein 70 family.

In terms of biological role, probable chaperone. Has a low intrinsic ATPase activity which is markedly stimulated by HscB. The chain is Chaperone protein HscA homolog from Vibrio vulnificus (strain CMCP6).